A 321-amino-acid chain; its full sequence is Phosphatidate cytidylyltransferase, mitochondrial (321 aa).

The protein belongs to the TAM41 family. The cofactor is Mg(2+). Co(2+) serves as cofactor. Cu(2+) is required as a cofactor.

It localises to the mitochondrion inner membrane. It carries out the reaction a 1,2-diacyl-sn-glycero-3-phosphate + CTP + H(+) = a CDP-1,2-diacyl-sn-glycerol + diphosphate. Its pathway is phospholipid metabolism; CDP-diacylglycerol biosynthesis; CDP-diacylglycerol from sn-glycerol 3-phosphate: step 3/3. Functionally, catalyzes the formation of CDP-diacylglycerol (CDP-DAG) from phosphatidic acid (PA) in the mitochondrial inner membrane. Required for the biosynthesis of the dimeric phospholipid cardiolipin, which stabilizes supercomplexes of the mitochondrial respiratory chain in the mitochondrial inner membrane. This chain is Phosphatidate cytidylyltransferase, mitochondrial, found in Caenorhabditis briggsae.